Consider the following 483-residue polypeptide: UDP-N-acetylmuramoyl-L-alanyl-D-glutamate--2,6-diaminopimelate ligase (483 aa).

UDP-N-acetyl-alpha-D-muramoyl-L-alanyl-D-glutamate is bound at residue S29. 107-113 (GTSGKTS) is a binding site for ATP. Residues 149 to 150 (TT), S176, Q182, and R184 contribute to the UDP-N-acetyl-alpha-D-muramoyl-L-alanyl-D-glutamate site. K216 carries the N6-carboxylysine modification. Residues R380, 404–407 (DNPR), G452, and E456 contribute to the meso-2,6-diaminopimelate site. The short motif at 404–407 (DNPR) is the Meso-diaminopimelate recognition motif element.

Belongs to the MurCDEF family. MurE subfamily. Mg(2+) serves as cofactor. Carboxylation is probably crucial for Mg(2+) binding and, consequently, for the gamma-phosphate positioning of ATP.

The protein localises to the cytoplasm. It catalyses the reaction UDP-N-acetyl-alpha-D-muramoyl-L-alanyl-D-glutamate + meso-2,6-diaminopimelate + ATP = UDP-N-acetyl-alpha-D-muramoyl-L-alanyl-gamma-D-glutamyl-meso-2,6-diaminopimelate + ADP + phosphate + H(+). It functions in the pathway cell wall biogenesis; peptidoglycan biosynthesis. Catalyzes the addition of meso-diaminopimelic acid to the nucleotide precursor UDP-N-acetylmuramoyl-L-alanyl-D-glutamate (UMAG) in the biosynthesis of bacterial cell-wall peptidoglycan. This chain is UDP-N-acetylmuramoyl-L-alanyl-D-glutamate--2,6-diaminopimelate ligase, found in Chelativorans sp. (strain BNC1).